Reading from the N-terminus, the 386-residue chain is S-adenosylmethionine synthase (386 aa).

His-14 serves as a coordination point for ATP. Position 16 (Asp-16) interacts with Mg(2+). Position 42 (Glu-42) interacts with K(+). Residues Glu-55 and Gln-101 each contribute to the L-methionine site. The flexible loop stretch occupies residues 101–111 (QSADIALGVDE). Residues 166 to 168 (DGK), 233 to 234 (RF), Asp-242, 248 to 249 (RK), Ala-265, and Lys-269 each bind ATP. Asp-242 contacts L-methionine. Lys-273 lines the L-methionine pocket.

The protein belongs to the AdoMet synthase family. As to quaternary structure, homotetramer; dimer of dimers. It depends on Mg(2+) as a cofactor. The cofactor is K(+).

Its subcellular location is the cytoplasm. It catalyses the reaction L-methionine + ATP + H2O = S-adenosyl-L-methionine + phosphate + diphosphate. Its pathway is amino-acid biosynthesis; S-adenosyl-L-methionine biosynthesis; S-adenosyl-L-methionine from L-methionine: step 1/1. Functionally, catalyzes the formation of S-adenosylmethionine (AdoMet) from methionine and ATP. The overall synthetic reaction is composed of two sequential steps, AdoMet formation and the subsequent tripolyphosphate hydrolysis which occurs prior to release of AdoMet from the enzyme. The protein is S-adenosylmethionine synthase of Acholeplasma laidlawii (strain PG-8A).